Here is a 191-residue protein sequence, read N- to C-terminus: FMN reductase (NADH) RutF (191 aa).

The protein belongs to the non-flavoprotein flavin reductase family. RutF subfamily.

The catalysed reaction is FMNH2 + NAD(+) = FMN + NADH + 2 H(+). Its function is as follows. Catalyzes the reduction of FMN to FMNH2 which is used to reduce pyrimidine by RutA via the Rut pathway. The protein is FMN reductase (NADH) RutF of Escherichia coli O1:K1 / APEC.